Reading from the N-terminus, the 314-residue chain is tRNA dimethylallyltransferase (314 aa).

11–18 (GPTAVGKT) is a binding site for ATP. Residue 13-18 (TAVGKT) participates in substrate binding. The tract at residues 36-39 (DSMQ) is interaction with substrate tRNA.

Belongs to the IPP transferase family. Monomer. Mg(2+) is required as a cofactor.

The catalysed reaction is adenosine(37) in tRNA + dimethylallyl diphosphate = N(6)-dimethylallyladenosine(37) in tRNA + diphosphate. Functionally, catalyzes the transfer of a dimethylallyl group onto the adenine at position 37 in tRNAs that read codons beginning with uridine, leading to the formation of N6-(dimethylallyl)adenosine (i(6)A). The sequence is that of tRNA dimethylallyltransferase from Bacillus anthracis.